The sequence spans 650 residues: Aminopeptidase B (650 aa).

At Ala-2 the chain carries N-acetylalanine. Position 7 is a phosphoserine (Ser-7). Position 298 to 302 (298 to 302 (GGMEN)) interacts with substrate. Zn(2+) is bound at residue His-325. Residue Glu-326 is the Proton acceptor of the active site. Zn(2+) contacts are provided by His-329 and Glu-348. Residue Lys-446 is modified to N6-acetyllysine.

The protein belongs to the peptidase M1 family. It depends on Zn(2+) as a cofactor.

It is found in the secreted. It catalyses the reaction Release of N-terminal Arg and Lys from oligopeptides when P1' is not Pro. Also acts on arylamides of Arg and Lys.. Functionally, exopeptidase which selectively removes arginine and/or lysine residues from the N-terminus of several peptide substrates including Arg(0)-Leu-enkephalin, Arg(0)-Met-enkephalin and Arg(-1)-Lys(0)-somatostatin-14. Can hydrolyze leukotriene A4 (LTA-4) into leukotriene B4 (LTB-4). This Homo sapiens (Human) protein is Aminopeptidase B (RNPEP).